The sequence spans 1265 residues: Protein diaphanous homolog 1 (1265 aa).

Methionine 1 is subject to N-acetylmethionine. A compositionally biased stretch (gly residues) spans 1–12; that stretch reads MEPSGGGLGPGR. 2 disordered regions span residues 1–42 and 54–83; these read MEPS…FTLK and SMRIKKEKEKPNSAHRNSSASYGDDPTAQS. Phosphoserine is present on serine 22. The segment covering 54 to 65 has biased composition (basic and acidic residues); it reads SMRIKKEKEKPN. The span at 67-83 shows a compositional bias: polar residues; the sequence is AHRNSSASYGDDPTAQS. Residues 84–449 enclose the GBD/FH3 domain; that stretch reads LQDISDDQVL…QIVLHKNGTD (366 aa). Residues 474-568 adopt a coiled-coil conformation; it reads VEKSEAKATE…KKEMASLSAV (95 aa). Positions 573–742 are disordered; it reads SVSSSAAVPQ…PPPPGMGVPP (170 aa). Composition is skewed to pro residues over residues 594–628 and 645–742; these read IPPPPPPPLPGGAVPPPPPPPLPAGTGIPPPPPLP and IPPP…GVPP. In terms of domain architecture, FH1 spans 625–757; the sequence is PPLPGGACIS…FGIPAAPVLP (133 aa). The residue at position 761 (threonine 761) is a Phosphothreonine. The FH2 domain occupies 762–1164; the sequence is PKKVYKPEVQ…MRRAKLAKEK (403 aa). An N6-acetyllysine mark is found at lysine 1050 and lysine 1096. The residue at position 1114 (tyrosine 1114) is a Phosphotyrosine. The stretch at 1141–1185 forms a coiled coil; that stretch reads AVKENQKRRETEEKMRRAKLAKEKAEKERLEKQQKREQLIDMNAE. In terms of domain architecture, DAD spans 1187–1215; that stretch reads DETGVMDSLLEALQSGAAFRRKRGPRQVN. The residue at position 1247 (serine 1247) is a Phosphoserine.

This sequence belongs to the formin homology family. Diaphanous subfamily. In terms of assembly, homodimer. Interacts with the GTP-bound form of RHOA. Interacts with RHOC, PFY1, MAPRE1, BAIAP2 and APC. Interacts with SCAI. Interacts with DCAF7, via FH2 domain. Interacts with NCDN. Interacts with OSBPL10, OSBPL2, VIM, TUBB and DYN1. Post-translationally, phosphorylation at Thr-761 is stimulated by cAMP and regulates stability, complex formation and mitochondrial movement. Expressed in testis. Present in Sertoli cells (at protein level).

Its subcellular location is the cell membrane. The protein localises to the cell projection. The protein resides in the ruffle membrane. It is found in the cytoplasm. It localises to the cytoskeleton. Its subcellular location is the microtubule organizing center. The protein localises to the centrosome. The protein resides in the spindle. It is found in the nucleus. Functionally, actin nucleation and elongation factor required for the assembly of F-actin structures, such as actin cables and stress fibers. Binds to the barbed end of the actin filament and slows down actin polymerization and depolymerization. Required for cytokinesis, and transcriptional activation of the serum response factor. DFR proteins couple Rho and Src tyrosine kinase during signaling and the regulation of actin dynamics. Functions as a scaffold protein for MAPRE1 and APC to stabilize microtubules and promote cell migration. Has neurite outgrowth promoting activity. Acts in a Rho-dependent manner to recruit PFY1 to the membrane. The MEMO1-RHOA-DIAPH1 signaling pathway plays an important role in ERBB2-dependent stabilization of microtubules at the cell cortex. It controls the localization of APC and CLASP2 to the cell membrane, via the regulation of GSK3B activity. In turn, membrane-bound APC allows the localization of the MACF1 to the cell membrane, which is required for microtubule capture and stabilization. Plays a role in the regulation of cell morphology and cytoskeletal organization. Required in the control of cell shape. Also acts as an actin nucleation and elongation factor in the nucleus by promoting nuclear actin polymerization inside the nucleus to drive serum-dependent SRF-MRTFA activity. The polypeptide is Protein diaphanous homolog 1 (Rattus norvegicus (Rat)).